A 203-amino-acid polypeptide reads, in one-letter code: Outer-membrane lipoprotein carrier protein (203 aa).

Residues M1–A20 form the signal peptide.

It belongs to the LolA family. In terms of assembly, monomer.

The protein resides in the periplasm. Its function is as follows. Participates in the translocation of lipoproteins from the inner membrane to the outer membrane. Only forms a complex with a lipoprotein if the residue after the N-terminal Cys is not an aspartate (The Asp acts as a targeting signal to indicate that the lipoprotein should stay in the inner membrane). The protein is Outer-membrane lipoprotein carrier protein of Methylibium petroleiphilum (strain ATCC BAA-1232 / LMG 22953 / PM1).